Here is a 391-residue protein sequence, read N- to C-terminus: Ferrochelatase (391 aa).

The Fe cation site is built by H196 and E281.

Belongs to the ferrochelatase family.

The protein localises to the cytoplasm. The enzyme catalyses heme b + 2 H(+) = protoporphyrin IX + Fe(2+). The protein operates within porphyrin-containing compound metabolism; protoheme biosynthesis; protoheme from protoporphyrin-IX: step 1/1. Catalyzes the ferrous insertion into protoporphyrin IX. The sequence is that of Ferrochelatase from Prochlorococcus marinus (strain MIT 9301).